Reading from the N-terminus, the 635-residue chain is MNLGIVSLFREHVDSIPNILPHQLATLDFLLRSILDENNSVLLFHIMGSGKTIIALLFALIVSKFKKVYILVPNINILKIFTYNMGIAVNLINSDYVLENIHIYSTTSFYSLNYNDNVINYNGLAKYNNAIFIIDEAHNIFGNNTGELMTVIKNKNKVPFLLLSGSPITNTPITLSNIISIMSDEGINFSDIIIQGKKVFQILLNENGVSVLKRILRDKISYYELQDTELPSIVFHGRRFLDTRIVYCHMSKLQERDYINVRKLCNNEMFEKNMNNVSLAVLGPLNLINNLDILFQDQDKELYPNLKISNGVLYGDELVSLNISSKFKYFIARIQSLTGKHFIYFSNSTYGGLIIKYIMLSNGYSEHNGSQGTNPKTIGGRLKTFAIVTSKMKSSLEELLAVYNSPANNDGSRIMFLFSSNIMSESYTLKEVMHIWFMTIPDTFSQYNQILGRSIRKFSYTNIAEPVNVYLLAAIYADFDDDITSLDNYSIDEINVLPFDIKKLLYLKFKTKETKRIYSILKDISVNYTLPPHPQIVDVVLGELTRQFFYHHSRVRADDPELFAAIDRVLCSPDSTRRYLDEITRGHFFVCNRVFEKALLYRHGEDIIVVPFKLSHDQFLWAINFRKEYNVGAPL.

The region spanning 32–185 (RSILDENNSV…SNIISIMSDE (154 aa)) is the Helicase ATP-binding domain. 45-52 (HIMGSGKT) serves as a coordination point for ATP. The DEXH box motif lies at 135–138 (DEAH).

It belongs to the helicase family. VETF subfamily. In terms of assembly, heterodimer of a 70 kDa and a 82 kDa subunit. Part of the early transcription complex composed of ETF, RAP94, and the DNA-directed RNA polymerase.

Its subcellular location is the virion. Functionally, acts with RNA polymerase to initiate transcription from early gene promoters. Is recruited by the RPO-associated protein of 94 kDa (RAP94) to form the early transcription complex, which also contains the core RNA polymerase. ETF heterodimer binds to early gene promoters. This Homo sapiens (Human) protein is Early transcription factor 70 kDa subunit (VETFS).